The chain runs to 1759 residues: Zinc finger protein castor homolog 1 (1759 aa).

Disordered regions lie at residues 1-26 (MDLG…PKRK) and 46-175 (KRAD…SSLR). 2 stretches are compositionally biased toward basic and acidic residues: residues 77–88 (PRSEEDKRRAVI) and 137–160 (EEPS…KEDS). The segment covering 161–171 (GPSTRQASGEA) has biased composition (polar residues). Residue Lys288 forms a Glycyl lysine isopeptide (Lys-Gly) (interchain with G-Cter in SUMO2) linkage. Residues 374 to 420 (SKYDVRGIQKPGPAKVPPTPSLAPAPLASVPSAPSAPGPGPEPPASL) are disordered. Pro residues predominate over residues 387 to 396 (AKVPPTPSLA). Residues 397 to 406 (PAPLASVPSA) show a composition bias toward low complexity. A compositionally biased stretch (pro residues) spans 407 to 417 (PSAPGPGPEPP). 3 C2H2-type zinc fingers span residues 551–575 (YHCM…ENFH), 610–634 (FHCR…KSYH), and 668–692 (FHCI…KRKH). Disordered stretches follow at residues 686-723 (TSHK…SSND), 736-776 (SSLS…SGLL), 824-843 (VSSG…VASG), and 889-949 (ATFD…AVPA). Residues 687–698 (SHKRKHERRHIR) are compositionally biased toward basic residues. Residues 699 to 712 (SSGALGLPPSLLGA) show a composition bias toward low complexity. Ser720 and Ser721 each carry phosphoserine. Low complexity predominate over residues 736-764 (SSLSASPTSQQSSASLAAATAATEAGPSA). Positions 925-939 (ASQDRSLDLTVKEPS) are enriched in basic and acidic residues. A Glycyl lysine isopeptide (Lys-Gly) (interchain with G-Cter in SUMO2) cross-link involves residue Lys975. Ser981 is modified (phosphoserine). The segment at 1031–1055 (FHCVVEECGALFSTLDGAIKHANFH) adopts a C2H2-type 4 zinc-finger fold. A disordered region spans residues 1067–1111 (TEAAFPASAAETKPPMAPSSPPVPPVTTATVSSLEGPAPSPASVP). A compositionally biased stretch (pro residues) spans 1081-1091 (PMAPSSPPVPP). A C2H2-type 5 zinc finger spans residues 1300 to 1324 (FHCIREGCQFSFLLKHQMTSHARKH). Residues 1367-1392 (ESSTMDRSCSSTPVGNESTAAGNTIS) are disordered. 3 C2H2-type zinc fingers span residues 1457 to 1481 (YHCT…AQHH), 1515 to 1537 (FHCL…RKHH), and 1571 to 1595 (FHCT…KRKH). Disordered regions lie at residues 1589 to 1620 (DSHK…DGSL) and 1643 to 1736 (LGDA…AGAR). Positions 1655-1673 (AAPGPREGAAAAAAAAGES) are enriched in low complexity. The segment covering 1674-1723 (SQEDEEEELELPEEEAEDDEDEDDDEDDDDEDDDEDDDDEDLRTDSEESL) has biased composition (acidic residues). Residues 1724–1736 (PEAAAEAAGAGAR) are compositionally biased toward low complexity.

In terms of tissue distribution, expressed in heart, lung, skeletal muscle, pancreas, testis, small intestine, and stomach, but it is not detectable in the adult brain.

The protein localises to the nucleus. In terms of biological role, transcriptional activator. Involved in vascular assembly and morphogenesis through direct transcriptional regulation of EGFL7. The polypeptide is Zinc finger protein castor homolog 1 (CASZ1) (Homo sapiens (Human)).